Reading from the N-terminus, the 455-residue chain is Anthocyanidin 3-O-glucosyltransferase (455 aa).

Residue His-18 is the Proton acceptor of the active site. Residue His-18 coordinates an anthocyanidin. The active-site Charge relay is Asp-118. Thr-139 is a binding site for UDP-alpha-D-glucose. An anthocyanidin is bound at residue His-148. Residues Ala-336, Gln-338, His-353, Trp-356, Ser-358, and Glu-361 each coordinate UDP-alpha-D-glucose. Gly-376 is an an anthocyanidin binding site. Residues Asp-377 and Gln-378 each contribute to the UDP-alpha-D-glucose site.

This sequence belongs to the UDP-glycosyltransferase family.

It carries out the reaction an anthocyanidin + UDP-alpha-D-glucose + H(+) = an anthocyanidin 3-O-beta-D-glucoside + UDP. It functions in the pathway pigment biosynthesis; anthocyanin biosynthesis. In the presence of other necessary color factors, this glycosylation reaction allows the accumulation of anthocyanin pigments. This Hordeum vulgare (Barley) protein is Anthocyanidin 3-O-glucosyltransferase (BZ1).